The chain runs to 161 residues: Nucleotide-binding protein Bcep1808_2648 (161 aa).

It belongs to the YajQ family.

In terms of biological role, nucleotide-binding protein. In Burkholderia vietnamiensis (strain G4 / LMG 22486) (Burkholderia cepacia (strain R1808)), this protein is Nucleotide-binding protein Bcep1808_2648.